The sequence spans 66 residues: Protein I177L (66 aa).

Residue asparagine 11 is glycosylated (N-linked (GlcNAc...) asparagine; by host).

Belongs to the asfivirus I177L family.

The protein localises to the virion. This African swine fever virus (strain Badajoz 1971 Vero-adapted) (Ba71V) protein is Protein I177L.